Reading from the N-terminus, the 423-residue chain is MTATSESISAQIEEKAIKAKTAAKSLRLATEKEKNEALAALADHLKQNMSYILTENAKDIEAGRKKGYDAAYIDRLSLNEDRVLDFADGLLEVAELDDPVGETLSSWTLDNGLKAEKVSVPLGVIGMIYEARPNVTVDATGLALKSGNAIVLKGGSSAIHSNTAIVSVMHQALDSTNIPRDAVQFIESTDRSATKQLFKMKEHIDVLIPRGGGALIQEVVENATVPVLETGVGNCHIYIDREADPEKAIDVMINAKTDRPAVCNALETLIVHEKWLEENSAALINALNEHGIQVHGDEKAVQMIPGARPAGEADWQNEYLSLDLAVKVAGSLEEACDHIETYGTKHSEAIITENPETAKAFLNTVDAAALYHNASTRFTDGGALGFGAEIGISTQKLHARGPMGLKELTTCKYIMRGDGHIRR.

It belongs to the gamma-glutamyl phosphate reductase family.

The protein resides in the cytoplasm. It catalyses the reaction L-glutamate 5-semialdehyde + phosphate + NADP(+) = L-glutamyl 5-phosphate + NADPH + H(+). It functions in the pathway amino-acid biosynthesis; L-proline biosynthesis; L-glutamate 5-semialdehyde from L-glutamate: step 2/2. Catalyzes the NADPH-dependent reduction of L-glutamate 5-phosphate into L-glutamate 5-semialdehyde and phosphate. The product spontaneously undergoes cyclization to form 1-pyrroline-5-carboxylate. In Bacillus licheniformis (strain ATCC 14580 / DSM 13 / JCM 2505 / CCUG 7422 / NBRC 12200 / NCIMB 9375 / NCTC 10341 / NRRL NRS-1264 / Gibson 46), this protein is Gamma-glutamyl phosphate reductase 2.